The sequence spans 199 residues: Translation initiation factor IF-3 (199 aa).

Belongs to the IF-3 family. In terms of assembly, monomer.

The protein localises to the cytoplasm. IF-3 binds to the 30S ribosomal subunit and shifts the equilibrium between 70S ribosomes and their 50S and 30S subunits in favor of the free subunits, thus enhancing the availability of 30S subunits on which protein synthesis initiation begins. The polypeptide is Translation initiation factor IF-3 (Gloeobacter violaceus (strain ATCC 29082 / PCC 7421)).